The chain runs to 901 residues: Desmocollin-2 (901 aa).

A signal peptide spans 1–27; sequence MEAARPSGSWNGALCRLLLLTLAILIF. Positions 28-135 are excised as a propeptide; the sequence is ASDACKNVTL…KEKVLRRAKR (108 aa). Residues Asn34 and Asn166 are each glycosylated (N-linked (GlcNAc...) asparagine). Cadherin domains lie at 136 to 243, 244 to 355, 356 to 471, 472 to 579, and 580 to 694; these read RWAP…YPIF, TEET…LPTF, TRTS…GPEC, NPPI…FIPK, and KTVI…QLGK. Residues 136 to 694 lie on the Extracellular side of the membrane; it reads RWAPIPCSML…IGGGGVQLGK (559 aa). An N-linked (GlcNAc...) (complex) asparagine glycan is attached at Asn392. N-linked (GlcNAc...) asparagine glycosylation is found at Asn546 and Asn629. The helical transmembrane segment at 695–715 threads the bilayer; that stretch reads WAILAILLGIALLFCILFTLV. Residues 716 to 901 lie on the Cytoplasmic side of the membrane; sequence CGASGTSKQP…RTLAEACMKR (186 aa). Ser864, Ser868, and Ser873 each carry phosphoserine.

In terms of assembly, interacts with DSP, PKP2 and JUP. Interacts with DSG3; the interaction may limit the interaction of DSC3 with p38MAPK family members and therefore repress p38MAPK signaling activation. Expressed at intercalated disks in the heart, where it is colocalized with CDH2 (at protein level). Expressed in intestinal mucosal cells (at protein level).

The protein resides in the cell membrane. The protein localises to the cell junction. It localises to the desmosome. Its function is as follows. A component of desmosome cell-cell junctions which are required for positive regulation of cellular adhesion. Promotes timely incorporation of DSG2 into desmosome intercellular junctions and promotes interaction of desmosome cell junctions with intermediate filament cytokeratin, via modulation of DSP phosphorylation. Plays an important role in desmosome-mediated maintenance of intestinal epithelial cell intercellular adhesion strength and barrier function. Positively regulates wound healing of intestinal mucosa via promotion of epithelial cell migration, and also plays a role in mechanotransduction of force between intestinal epithelial cells and extracellular matrix. May contribute to epidermal cell positioning (stratification) by mediating differential adhesiveness between cells that express different isoforms. May promote p38MAPK signaling activation that facilitates keratinocyte migration. This chain is Desmocollin-2, found in Homo sapiens (Human).